The chain runs to 198 residues: Glycerol-3-phosphate acyltransferase (198 aa).

The next 5 membrane-spanning stretches (helical) occupy residues 2–22, 55–75, 88–108, 118–138, and 162–182; these read IIVI…TGYL, MITQ…CMLI, YLSI…FLGF, VGAF…VYFV, and IALR…GLLI.

It belongs to the PlsY family. As to quaternary structure, probably interacts with PlsX.

The protein localises to the cell membrane. It catalyses the reaction an acyl phosphate + sn-glycerol 3-phosphate = a 1-acyl-sn-glycero-3-phosphate + phosphate. Its pathway is lipid metabolism; phospholipid metabolism. In terms of biological role, catalyzes the transfer of an acyl group from acyl-phosphate (acyl-PO(4)) to glycerol-3-phosphate (G3P) to form lysophosphatidic acid (LPA). This enzyme utilizes acyl-phosphate as fatty acyl donor, but not acyl-CoA or acyl-ACP. The protein is Glycerol-3-phosphate acyltransferase of Clostridium acetobutylicum (strain ATCC 824 / DSM 792 / JCM 1419 / IAM 19013 / LMG 5710 / NBRC 13948 / NRRL B-527 / VKM B-1787 / 2291 / W).